The following is a 640-amino-acid chain: Threonine--tRNA ligase (640 aa).

In terms of domain architecture, TGS spans 1-61 (MPTITLPDGS…ENDASLQIIT (61 aa)). The tract at residues 242–533 (DHRKIGKRLG…LIEHYEGAFP (292 aa)) is catalytic. Zn(2+) is bound by residues cysteine 333, histidine 384, and histidine 510.

The protein belongs to the class-II aminoacyl-tRNA synthetase family. As to quaternary structure, homodimer. Zn(2+) is required as a cofactor.

Its subcellular location is the cytoplasm. The enzyme catalyses tRNA(Thr) + L-threonine + ATP = L-threonyl-tRNA(Thr) + AMP + diphosphate + H(+). In terms of biological role, catalyzes the attachment of threonine to tRNA(Thr) in a two-step reaction: L-threonine is first activated by ATP to form Thr-AMP and then transferred to the acceptor end of tRNA(Thr). Also edits incorrectly charged L-seryl-tRNA(Thr). The sequence is that of Threonine--tRNA ligase from Pseudomonas syringae pv. tomato (strain ATCC BAA-871 / DC3000).